Consider the following 317-residue polypeptide: UDP-3-O-acylglucosamine N-acyltransferase (317 aa).

The active-site Proton acceptor is H229.

Belongs to the transferase hexapeptide repeat family. LpxD subfamily. As to quaternary structure, homotrimer.

The catalysed reaction is a UDP-3-O-[(3R)-3-hydroxyacyl]-alpha-D-glucosamine + a (3R)-hydroxyacyl-[ACP] = a UDP-2-N,3-O-bis[(3R)-3-hydroxyacyl]-alpha-D-glucosamine + holo-[ACP] + H(+). The protein operates within bacterial outer membrane biogenesis; LPS lipid A biosynthesis. Functionally, catalyzes the N-acylation of UDP-3-O-acylglucosamine using 3-hydroxyacyl-ACP as the acyl donor. Is involved in the biosynthesis of lipid A, a phosphorylated glycolipid that anchors the lipopolysaccharide to the outer membrane of the cell. This Campylobacter curvus (strain 525.92) protein is UDP-3-O-acylglucosamine N-acyltransferase.